A 348-amino-acid chain; its full sequence is Gamma-glutamyl hydrolase 1 (348 aa).

An N-terminal signal peptide occupies residues 1 to 23 (MIDNNCLYKEELNRNSYSGLAKE). The 297-residue stretch at 46-342 (SPDPNLNYRP…RGYDEVYIFT (297 aa)) folds into the Gamma-glutamyl hydrolase domain. C156 functions as the Nucleophile in the catalytic mechanism. Residue H269 is part of the active site.

The protein belongs to the peptidase C26 family. Highly expressed in roots and at lower levels in leaves, stems and siliques.

It localises to the vacuole. The protein resides in the secreted. The protein localises to the extracellular space. Its subcellular location is the cell wall. It catalyses the reaction (6S)-5,6,7,8-tetrahydrofolyl-(gamma-L-Glu)(n) + (n-1) H2O = (6S)-5,6,7,8-tetrahydrofolate + (n-1) L-glutamate. Its function is as follows. Cleaves the polyglutamate sidechains of folate polyglutamates in the vacuole. Is important for polyglutamyl tail length determination before vacuolar exit. Plays a role in folate stability and intracellular folate content. In Arabidopsis thaliana (Mouse-ear cress), this protein is Gamma-glutamyl hydrolase 1 (GGH1).